Reading from the N-terminus, the 354-residue chain is Uroporphyrinogen decarboxylase (354 aa).

Residues 27-31 (RQAGR), Asp-77, Tyr-154, Thr-209, and His-327 contribute to the substrate site.

This sequence belongs to the uroporphyrinogen decarboxylase family. Homodimer.

Its subcellular location is the cytoplasm. The enzyme catalyses uroporphyrinogen III + 4 H(+) = coproporphyrinogen III + 4 CO2. It functions in the pathway porphyrin-containing compound metabolism; protoporphyrin-IX biosynthesis; coproporphyrinogen-III from 5-aminolevulinate: step 4/4. Its function is as follows. Catalyzes the decarboxylation of four acetate groups of uroporphyrinogen-III to yield coproporphyrinogen-III. This chain is Uroporphyrinogen decarboxylase, found in Sodalis glossinidius (strain morsitans).